Consider the following 238-residue polypeptide: D/L-lactic acid transporter (238 aa).

Transmembrane regions (helical) follow at residues 2 to 22 (VHQL…GVGV) and 39 to 59 (IFAI…FGNV). The NPA 1 signature appears at 62–64 (NPA). Helical transmembrane passes span 80 to 100 (FIPY…IVWI), 135 to 155 (FFVE…ISEI), and 158 to 178 (PGIV…GLGG). An NPA 2 motif is present at residues 185 to 187 (NLA). Residues 211-231 (YGIIVPGIAPFVGAAIAAWFM) traverse the membrane as a helical segment.

This sequence belongs to the MIP/aquaporin (TC 1.A.8) family.

The protein resides in the cell membrane. Its function is as follows. Transporter that facilitates the transmembrane diffusion of D/L-lactic acid. Is involved in the cellular racemization of lactate and lactate metabolism. The transported molecule is indeed lactic acid and not the lactate anion, in agreement with the assumption that, with very few exceptions, MIPs (major intrinsic proteins) only facilitate the transport of uncharged solutes. Also facilitates urea and H(2)O(2) diffusion across membranes, but is not permeable to water, glycerol and dihydroxyacetone. The polypeptide is D/L-lactic acid transporter (Lactiplantibacillus plantarum (strain ATCC BAA-793 / NCIMB 8826 / WCFS1) (Lactobacillus plantarum)).